Reading from the N-terminus, the 315-residue chain is MSENYLHTTVLLDEAVKGLNLRPDSVYLDGTFGRGGHSRLILSKLGAQGRLFAIDRDPAAIEAARAIEDARFAIIHGPFSAMAEYMAQRDLLGKVDGILLDLGVSSPQLDDPERGFSFMRDGPLDMRMDTTRGQSAAQWLAQASAEDIAWVLKTFGEERFAKRIAQAIVAHNRQQPMTRTRELAALIADASPFRDKHKHPATRSFQAIRIYINSELEEIERALDGALTVLAPGGRLSVISFHSLEDRLVKQFIRQHSRGPQVPAGLPLTEAQIAAQYQDQRLLKAAGKMQPSAREISDNPRARSSVLRFAEKLAP.

Residues glycine 35–histidine 37, aspartate 55, phenylalanine 79, aspartate 101, and glutamine 108 each bind S-adenosyl-L-methionine.

The protein belongs to the methyltransferase superfamily. RsmH family.

Its subcellular location is the cytoplasm. The enzyme catalyses cytidine(1402) in 16S rRNA + S-adenosyl-L-methionine = N(4)-methylcytidine(1402) in 16S rRNA + S-adenosyl-L-homocysteine + H(+). Functionally, specifically methylates the N4 position of cytidine in position 1402 (C1402) of 16S rRNA. The protein is Ribosomal RNA small subunit methyltransferase H of Sodalis glossinidius (strain morsitans).